The sequence spans 208 residues: Probable acyl-homoserine-lactone synthase (208 aa).

Belongs to the autoinducer synthase family.

It catalyses the reaction a fatty acyl-[ACP] + S-adenosyl-L-methionine = an N-acyl-L-homoserine lactone + S-methyl-5'-thioadenosine + holo-[ACP] + H(+). Functionally, required for the synthesis of OHHL (N-(3-oxooctanoyl)-L-homoserine lactone), an autoinducer molecule which binds to TraR and thus acts in the control of conjugal transfer. The sequence is that of Probable acyl-homoserine-lactone synthase (traI) from Sinorhizobium fredii (strain NBRC 101917 / NGR234).